The following is a 1155-amino-acid chain: Eukaryotic translation initiation factor 3 subunit A (1155 aa).

Residues 319–502 (LQRMAAHVLL…NSIYFGTDLT (184 aa)) form the PCI domain. 2 disordered regions span residues 589-613 (QNNAREEEEARRQEEESRKAKLAEQ) and 836-1155 (AAEA…VKRR). Composition is skewed to basic and acidic residues over residues 836–900 (AAEA…RGGD), 925–987 (DRNE…EPDS), 1004–1057 (SRDD…DAAP), and 1066–1101 (DAPRQSDRDNRRPAGDRRDREVRGGDLRGPESRAPK). Residues 1104–1118 (GPSGGTGTAASGGGN) show a composition bias toward gly residues. A compositionally biased stretch (basic and acidic residues) spans 1125–1145 (PRDEPAPKRDQPQDKENKAVD).

This sequence belongs to the eIF-3 subunit A family. As to quaternary structure, component of the eukaryotic translation initiation factor 3 (eIF-3) complex. The eIF-3 complex interacts with pix.

It is found in the cytoplasm. In terms of biological role, RNA-binding component of the eukaryotic translation initiation factor 3 (eIF-3) complex, which is involved in protein synthesis of a specialized repertoire of mRNAs and, together with other initiation factors, stimulates binding of mRNA and methionyl-tRNAi to the 40S ribosome. The eIF-3 complex specifically targets and initiates translation of a subset of mRNAs involved in cell proliferation. This is Eukaryotic translation initiation factor 3 subunit A from Drosophila pseudoobscura pseudoobscura (Fruit fly).